The primary structure comprises 62 residues: Large ribosomal subunit protein eL24 (62 aa).

Positions 7, 10, 33, and 37 each coordinate Zn(2+). The segment at 7–37 adopts a C4-type zinc-finger fold; the sequence is CSFCGKDILPGTGLMYVRNDGSLLWFCSSKC.

It belongs to the eukaryotic ribosomal protein eL24 family. In terms of assembly, part of the 50S ribosomal subunit. Forms a cluster with proteins L3 and L14. It depends on Zn(2+) as a cofactor.

Its function is as follows. Binds to the 23S rRNA. The sequence is that of Large ribosomal subunit protein eL24 from Sulfolobus acidocaldarius (strain ATCC 33909 / DSM 639 / JCM 8929 / NBRC 15157 / NCIMB 11770).